Here is a 168-residue protein sequence, read N- to C-terminus: ATP synthase subunit b (168 aa).

The helical transmembrane segment at 9-29 threads the bilayer; the sequence is LFNLSTFVFTIINLLVLYYIL.

It belongs to the ATPase B chain family. In terms of assembly, F-type ATPases have 2 components, F(1) - the catalytic core - and F(0) - the membrane proton channel. F(1) has five subunits: alpha(3), beta(3), gamma(1), delta(1), epsilon(1). F(0) has three main subunits: a(1), b(2) and c(10-14). The alpha and beta chains form an alternating ring which encloses part of the gamma chain. F(1) is attached to F(0) by a central stalk formed by the gamma and epsilon chains, while a peripheral stalk is formed by the delta and b chains.

It localises to the cell membrane. Functionally, f(1)F(0) ATP synthase produces ATP from ADP in the presence of a proton or sodium gradient. F-type ATPases consist of two structural domains, F(1) containing the extramembraneous catalytic core and F(0) containing the membrane proton channel, linked together by a central stalk and a peripheral stalk. During catalysis, ATP synthesis in the catalytic domain of F(1) is coupled via a rotary mechanism of the central stalk subunits to proton translocation. Component of the F(0) channel, it forms part of the peripheral stalk, linking F(1) to F(0). This is ATP synthase subunit b from Caldanaerobacter subterraneus subsp. tengcongensis (strain DSM 15242 / JCM 11007 / NBRC 100824 / MB4) (Thermoanaerobacter tengcongensis).